The chain runs to 438 residues: tRNA(Ile)-lysidine synthase (438 aa).

Residue 27–32 coordinates ATP; it reads SGGVDS.

This sequence belongs to the tRNA(Ile)-lysidine synthase family.

The protein resides in the cytoplasm. It carries out the reaction cytidine(34) in tRNA(Ile2) + L-lysine + ATP = lysidine(34) in tRNA(Ile2) + AMP + diphosphate + H(+). Its function is as follows. Ligates lysine onto the cytidine present at position 34 of the AUA codon-specific tRNA(Ile) that contains the anticodon CAU, in an ATP-dependent manner. Cytidine is converted to lysidine, thus changing the amino acid specificity of the tRNA from methionine to isoleucine. This chain is tRNA(Ile)-lysidine synthase, found in Vibrio parahaemolyticus serotype O3:K6 (strain RIMD 2210633).